The primary structure comprises 459 residues: UDP-N-acetylmuramate--L-alanine ligase (459 aa).

Gly-118–Thr-124 contacts ATP.

This sequence belongs to the MurCDEF family.

The protein resides in the cytoplasm. The enzyme catalyses UDP-N-acetyl-alpha-D-muramate + L-alanine + ATP = UDP-N-acetyl-alpha-D-muramoyl-L-alanine + ADP + phosphate + H(+). It functions in the pathway cell wall biogenesis; peptidoglycan biosynthesis. In terms of biological role, cell wall formation. This is UDP-N-acetylmuramate--L-alanine ligase from Agathobacter rectalis (strain ATCC 33656 / DSM 3377 / JCM 17463 / KCTC 5835 / VPI 0990) (Eubacterium rectale).